The primary structure comprises 488 residues: Type II restriction enzyme HgaI (488 aa).

The catalysed reaction is Endonucleolytic cleavage of DNA to give specific double-stranded fragments with terminal 5'-phosphates.. Its function is as follows. An S subtype restriction enzyme that recognizes the double-stranded sequences 5'-GACGC-3' and 5'-GCGTC-3' and cleaves respectively 10 bases after G-1 and 10 bases before G'-1. This Avibacterium volantium (Pasteurella volantium) protein is Type II restriction enzyme HgaI (hgaIR).